The primary structure comprises 515 residues: Aldehyde dehydrogenase tropH (515 aa).

Position 238-243 (238-243) interacts with NAD(+); it reads GSVATG. Glu260 serves as the catalytic Proton acceptor. Catalysis depends on Cys295, which acts as the Nucleophile.

This sequence belongs to the aldehyde dehydrogenase family.

It carries out the reaction an aldehyde + NAD(+) + H2O = a carboxylate + NADH + 2 H(+). Its pathway is secondary metabolite biosynthesis. Functionally, aldehyde dehydrogenase; part of the gene cluster that mediates the biosynthesis of the tropolone class of fungal maleic anhydrides. The pathway begins with the synthesis of 3-methylorcinaldehyde by the non-reducing polyketide synthase (PKS) tropA. 3-methylorcinaldehyde is the substrate for the FAD-dependent monooxygenase tropB to yield a dearomatized hydroxycyclohexadione. The 2-oxoglutarate-dependent dioxygenase tropC then performs the oxidative ring expansion to provide the first tropolone metabolite stipitaldehyde. Trop D converts stipitaldehyde into stipitacetal which is in turn converted to stipitalide by the short-chain dehydrogenase/reductase tropE. The next steps involve tropF, tropG, tropH, tropI and tropJ to form successive tropolone maleic anhydrides including stipitaldehydic, stipitatonic and stipitatic acids. This Talaromyces stipitatus (strain ATCC 10500 / CBS 375.48 / QM 6759 / NRRL 1006) (Penicillium stipitatum) protein is Aldehyde dehydrogenase tropH.